The following is a 418-amino-acid chain: UDP-N-acetylglucosamine 1-carboxyvinyltransferase 2 (418 aa).

22–23 (KN) is a binding site for phosphoenolpyruvate. R93 provides a ligand contact to UDP-N-acetyl-alpha-D-glucosamine. The active-site Proton donor is C117. The residue at position 117 (C117) is a 2-(S-cysteinyl)pyruvic acid O-phosphothioketal. Residues 122–126 (RPIDQ), D305, and I327 contribute to the UDP-N-acetyl-alpha-D-glucosamine site.

Belongs to the EPSP synthase family. MurA subfamily.

It localises to the cytoplasm. It catalyses the reaction phosphoenolpyruvate + UDP-N-acetyl-alpha-D-glucosamine = UDP-N-acetyl-3-O-(1-carboxyvinyl)-alpha-D-glucosamine + phosphate. Its pathway is cell wall biogenesis; peptidoglycan biosynthesis. In terms of biological role, cell wall formation. Adds enolpyruvyl to UDP-N-acetylglucosamine. The polypeptide is UDP-N-acetylglucosamine 1-carboxyvinyltransferase 2 (Clostridium acetobutylicum (strain ATCC 824 / DSM 792 / JCM 1419 / IAM 19013 / LMG 5710 / NBRC 13948 / NRRL B-527 / VKM B-1787 / 2291 / W)).